We begin with the raw amino-acid sequence, 87 residues long: Neurotoxin Cex1 (87 aa).

An N-terminal signal peptide occupies residues 1–19 (MNSLLMITTCLVLFGTVWA). The region spanning 20-85 (KEGYLVSKST…TYPIPGKSCG (66 aa)) is the LCN-type CS-alpha/beta domain. Intrachain disulfides connect Cys31–Cys84, Cys35–Cys60, Cys44–Cys65, and Cys48–Cys67. Position 84 is a cysteine amide (Cys84). The propeptide occupies 85-87 (GKK).

It belongs to the long (4 C-C) scorpion toxin superfamily. Sodium channel inhibitor family. Beta subfamily. As to expression, expressed by the venom gland.

It localises to the secreted. Functionally, beta toxins bind voltage-independently at site-4 of sodium channels (Nav) and shift the voltage of activation toward more negative potentials thereby affecting sodium channel activation and promoting spontaneous and repetitive firing. The polypeptide is Neurotoxin Cex1 (Centruroides exilicauda (Bark scorpion)).